A 466-amino-acid chain; its full sequence is Ornithine decarboxylase (466 aa).

Position 116 is an N6-(pyridoxal phosphate)lysine (Lys-116). Residues Ser-247, Gly-286, and 318–321 (EPGR) each bind pyridoxal 5'-phosphate. 362-363 (FD) provides a ligand contact to substrate. The active-site Proton donor; shared with dimeric partner is Cys-411. Asp-412 is a substrate binding site. Tyr-441 contacts pyridoxal 5'-phosphate.

Belongs to the Orn/Lys/Arg decarboxylase class-II family. In terms of assembly, homodimer. Only the dimer is catalytically active, as the active sites are constructed of residues from both monomers. Requires pyridoxal 5'-phosphate as cofactor.

It localises to the cytoplasm. The enzyme catalyses L-ornithine + H(+) = putrescine + CO2. Its pathway is amine and polyamine biosynthesis; putrescine biosynthesis via L-ornithine pathway; putrescine from L-ornithine: step 1/1. Inhibited by antizyme (AZ) OAZ1 in response to polyamine levels. AZ inhibits the assembly of the functional homodimer by binding to ODC monomers and targeting them for ubiquitin-independent proteolytic destruction by the 26S proteasome. In terms of biological role, catalyzes the first and rate-limiting step of polyamine biosynthesis that converts ornithine into putrescine, which is the precursor for the polyamines, spermidine and spermine. Polyamines are essential for cell proliferation and are implicated in cellular processes, ranging from DNA replication to apoptosis. This Saccharomyces cerevisiae (strain ATCC 204508 / S288c) (Baker's yeast) protein is Ornithine decarboxylase.